The primary structure comprises 337 residues: Glyceraldehyde-3-phosphate dehydrogenase, cytosolic (337 aa).

Residues 13 to 14 (RI), D35, and R82 each bind NAD(+). D-glyceraldehyde 3-phosphate contacts are provided by residues 153-155 (SCT), T184, 213-214 (TG), and R236. The active-site Nucleophile is C154. Position 318 (N318) interacts with NAD(+).

The protein belongs to the glyceraldehyde-3-phosphate dehydrogenase family. As to quaternary structure, homotetramer.

The protein localises to the cytoplasm. It carries out the reaction D-glyceraldehyde 3-phosphate + phosphate + NAD(+) = (2R)-3-phospho-glyceroyl phosphate + NADH + H(+). It functions in the pathway carbohydrate degradation; glycolysis; pyruvate from D-glyceraldehyde 3-phosphate: step 1/5. Its function is as follows. Key enzyme in glycolysis that catalyzes the first step of the pathway by converting D-glyceraldehyde 3-phosphate (G3P) into 3-phospho-D-glyceroyl phosphate. Essential for the maintenance of cellular ATP levels and carbohydrate metabolism. This is Glyceraldehyde-3-phosphate dehydrogenase, cytosolic (GAPC) from Craterostigma plantagineum (Blue gem).